We begin with the raw amino-acid sequence, 378 residues long: Putative glutamate--cysteine ligase 2 (378 aa).

The protein belongs to the glutamate--cysteine ligase type 2 family. YbdK subfamily.

The enzyme catalyses L-cysteine + L-glutamate + ATP = gamma-L-glutamyl-L-cysteine + ADP + phosphate + H(+). In terms of biological role, ATP-dependent carboxylate-amine ligase which exhibits weak glutamate--cysteine ligase activity. The sequence is that of Putative glutamate--cysteine ligase 2 from Salinispora arenicola (strain CNS-205).